Consider the following 108-residue polypeptide: Nucleoid-associated protein HCH_02614 (108 aa).

The protein belongs to the YbaB/EbfC family. Homodimer.

It localises to the cytoplasm. It is found in the nucleoid. Functionally, binds to DNA and alters its conformation. May be involved in regulation of gene expression, nucleoid organization and DNA protection. This chain is Nucleoid-associated protein HCH_02614, found in Hahella chejuensis (strain KCTC 2396).